The following is a 208-amino-acid chain: MAIYEVKHPLIQHKLGLLRKADLSTKQFRELASEVARLLTYEATKDLETESITINGWAGPVTVQQIKGKKITIVPILRAGLGMMNGVLDMIPSAKVSVVGLYRNEETLEPVAYYEKFTTDMEERTALIIDPMLATGGSLLATIEMLKATGCRRIKGLFLVAVPEGLEKISSAHPDVEIYVASIDERLNEHGYILPGLGDAGDKIFGTK.

5-phospho-alpha-D-ribose 1-diphosphate contacts are provided by residues Arg-78, Arg-103, and 130–138; that span reads DPMLATGGS. Residues Ile-193 and 198–200 each bind uracil; that span reads GDA. Asp-199 provides a ligand contact to 5-phospho-alpha-D-ribose 1-diphosphate.

This sequence belongs to the UPRTase family. It depends on Mg(2+) as a cofactor.

The enzyme catalyses UMP + diphosphate = 5-phospho-alpha-D-ribose 1-diphosphate + uracil. The protein operates within pyrimidine metabolism; UMP biosynthesis via salvage pathway; UMP from uracil: step 1/1. Its activity is regulated as follows. Allosterically activated by GTP. Functionally, catalyzes the conversion of uracil and 5-phospho-alpha-D-ribose 1-diphosphate (PRPP) to UMP and diphosphate. This is Uracil phosphoribosyltransferase from Trichlorobacter lovleyi (strain ATCC BAA-1151 / DSM 17278 / SZ) (Geobacter lovleyi).